Reading from the N-terminus, the 132-residue chain is Probable histone H2A.2 (132 aa).

This sequence belongs to the histone H2A family. In terms of assembly, the nucleosome is a histone octamer containing two molecules each of H2A, H2B, H3 and H4 assembled in one H3-H4 heterotetramer and two H2A-H2B heterodimers. The octamer wraps approximately 147 bp of DNA. Post-translationally, not ubiquitinated. As to expression, expressed mainly in non-dividing tissues of the plant. Also found in meristems and dividing cells.

It localises to the nucleus. Its subcellular location is the chromosome. In terms of biological role, core component of nucleosome. Nucleosomes wrap and compact DNA into chromatin, limiting DNA accessibility to the cellular machineries which require DNA as a template. Histones thereby play a central role in transcription regulation, DNA repair, DNA replication and chromosomal stability. DNA accessibility is regulated via a complex set of post-translational modifications of histones, also called histone code, and nucleosome remodeling. The protein is Probable histone H2A.2 of Arabidopsis thaliana (Mouse-ear cress).